The chain runs to 78 residues: Exodeoxyribonuclease 7 small subunit (78 aa).

Belongs to the XseB family. In terms of assembly, heterooligomer composed of large and small subunits.

Its subcellular location is the cytoplasm. The enzyme catalyses Exonucleolytic cleavage in either 5'- to 3'- or 3'- to 5'-direction to yield nucleoside 5'-phosphates.. Bidirectionally degrades single-stranded DNA into large acid-insoluble oligonucleotides, which are then degraded further into small acid-soluble oligonucleotides. The chain is Exodeoxyribonuclease 7 small subunit from Psychromonas ingrahamii (strain DSM 17664 / CCUG 51855 / 37).